The sequence spans 453 residues: Serine--tRNA ligase (453 aa).

An L-serine-binding site is contributed by 249–251 (TSE). ATP contacts are provided by residues 280–282 (RKE) and Val296. Glu303 contributes to the L-serine binding site. 367 to 370 (EMVS) is an ATP binding site. Thr404 lines the L-serine pocket.

The protein belongs to the class-II aminoacyl-tRNA synthetase family. Type-1 seryl-tRNA synthetase subfamily. As to quaternary structure, homodimer. The tRNA molecule binds across the dimer.

The protein localises to the cytoplasm. The catalysed reaction is tRNA(Ser) + L-serine + ATP = L-seryl-tRNA(Ser) + AMP + diphosphate + H(+). It carries out the reaction tRNA(Sec) + L-serine + ATP = L-seryl-tRNA(Sec) + AMP + diphosphate + H(+). It functions in the pathway aminoacyl-tRNA biosynthesis; selenocysteinyl-tRNA(Sec) biosynthesis; L-seryl-tRNA(Sec) from L-serine and tRNA(Sec): step 1/1. Catalyzes the attachment of serine to tRNA(Ser). Is also able to aminoacylate tRNA(Sec) with serine, to form the misacylated tRNA L-seryl-tRNA(Sec), which will be further converted into selenocysteinyl-tRNA(Sec). In Archaeoglobus fulgidus (strain ATCC 49558 / DSM 4304 / JCM 9628 / NBRC 100126 / VC-16), this protein is Serine--tRNA ligase.